The following is a 409-amino-acid chain: MQLPKVVLLLCAAALLLSGAVRGCGPGRVVGRRRRPTKLSPLSYKQFSPNVPEKTLGASGRYEGKISRNSERFKELTPNYNPDIIFKDEEITGADRLMTQRCKDRLNSLAISVMNQWPGVKLRVTEGWDEDGHHFEESLHYEGRAVDITTSDRDRNKYGMLARLAVEAGFDWVYYESKAHIHCSVKSEHSAAAKTGGCFPGEALATLESGEKIPVSQLSPGLRVLAMDNSGRPTYSDFLSFLDHSPKEEHMFQVIKTQDPHRRLFLTPAHLIFVSDNYSTPASEFQAVFASSVRPGQYILVSNVVGLIPAKVRSVNTQTNYGAYAPLTQHGTLVVDDVVVSCFALVQKQRLAQIVYWPLRVLYNLGIIAGTQPSQQMGIHWYSKALYHLGRLILHGNEFHPLGIVQLES.

The first 23 residues, 1–23, serve as a signal peptide directing secretion; it reads MQLPKVVLLLCAAALLLSGAVRG. A lipid anchor (N-palmitoyl cysteine) is attached at cysteine 24. 7 residues coordinate Ca(2+): glutamate 89, glutamate 90, aspartate 95, threonine 125, glutamate 126, aspartate 129, and aspartate 131. Residues histidine 140, aspartate 147, and histidine 182 each coordinate Zn(2+). Glycine 197 is lipidated: Cholesterol glycine ester.

The protein belongs to the hedgehog family. As to quaternary structure, multimer. In terms of assembly, interacts with BOC and CDON. Interacts with PTCH1. Interacts with glypican GPC3. Cholesterylation is required for N-product targeting to lipid rafts and multimerization. Post-translationally, the C-terminal domain displays an autoproteolysis activity and a cholesterol transferase activity. Both activities result in the cleavage of the full-length protein and covalent attachment of a cholesterol moiety to the C-terminal of the newly generated N-product. The N-product is the active species in both local and long-range signaling, whereas the C-product is degraded in the endoplasmic reticulum. In terms of processing, N-palmitoylation by HHAT of N-product is required for indian hedgehog protein N-product multimerization and full activity. As to expression, expressed in the marginal zone at early gastrulation. At stage 14, expression begins in the neural plate with expression becoming more prominent in the anterodorsal area at neural tube closure. At this stage, also expressed diffusely in the somitic and pre-somitic mesoderm. By the early tadpole (stages 28-30), expression is widespread throughout anterior structures with highest levels in the otic vesicle, the eye, and the branchial arches.

It is found in the cell membrane. The protein localises to the endoplasmic reticulum membrane. The protein resides in the golgi apparatus membrane. It localises to the secreted. It catalyses the reaction glycyl-L-cysteinyl-[protein] + cholesterol + H(+) = [protein]-C-terminal glycyl cholesterol ester + N-terminal L-cysteinyl-[protein]. Functionally, signal involved in the early induction and patterning of anterodorsal ectoderm, nervous system and somites. Induces ectopic cement gland formation in embryos. It is involved in the regulation of endochondral skeleton formation, and the development of retinal pigment epithelium (RPE), photoreceptors and periocular tissues. The C-terminal part of the indian hedgehog protein precursor displays an autoproteolysis and a cholesterol transferase activity. Both activities result in the cleavage of the full-length protein into two parts followed by the covalent attachment of a cholesterol moiety to the C-terminal of the newly generated N-product. Both activities occur in the endoplasmic reticulum. In terms of biological role, the dually lipidated indian hedgehog protein N-product is a morphogen which is essential for a variety of patterning events during development. Binds to the patched (PTCH1) receptor, which functions in association with smoothened (SMO), to activate the transcription of target genes. Signal involved in the early induction and patterning of anterodorsal ectoderm, nervous system and somites. Induces ectopic cement gland formation in embryos. This chain is Indian hedgehog protein, found in Xenopus laevis (African clawed frog).